The following is a 507-amino-acid chain: Hippocampus abundant transcript-like protein 1 (507 aa).

The segment at 1 to 27 (MSTDGESPEEPRWKAVASPKASTMPEK) is disordered. Residues 1–51 (MSTDGESPEEPRWKAVASPKASTMPEKRGSAQAASGSWLQGFGHPSVYHAA) lie on the Extracellular side of the membrane. Residues 52 to 72 (FVIFLEFFAWGLLTTPMLTVL) traverse the membrane as a helical segment. Residues 73-84 (HETFPQHTFLMN) are Cytoplasmic-facing. A helical membrane pass occupies residues 85-105 (GLIQGVKGLLSFLSAPLIGAL). The Extracellular portion of the chain corresponds to 106-113 (SDVWGRKP). A helical membrane pass occupies residues 114–134 (FLLGTVFFTCFPIPLMRINPW). Residues 135 to 136 (WY) lie on the Cytoplasmic side of the membrane. The helical transmembrane segment at 137-157 (FGMISVSGVFSVTFSVIFAYV) threads the bilayer. Residues 158-170 (ADFTQEHERSTAY) are Extracellular-facing. A helical transmembrane segment spans residues 171–191 (GWVSATFAASLVSSPAIGTYL). Residues 192-198 (SANYGDS) are Cytoplasmic-facing. A helical membrane pass occupies residues 199-219 (LVVLVATLVALLDICFILIAV). Residues 220 to 257 (PESLSEKIRPASWGAQISWKQADPFASLKKVGKDSTVL) are Extracellular-facing. Residues 258–278 (LICITVFLSYLPEAGQYSSFF) traverse the membrane as a helical segment. Residues 279-283 (LYLRQ) are Cytoplasmic-facing. A helical transmembrane segment spans residues 284 to 304 (VIGFGSVKIVAFIAMVGILSI). The Extracellular portion of the chain corresponds to 305-323 (VAQTVFLSKLMRSLGNKNT). Residues 324–344 (VLLGLGFQMLQLAWYGFGSQA) form a helical membrane-spanning segment. The Cytoplasmic segment spans residues 345–347 (WMM). The chain crosses the membrane as a helical span at residues 348 to 368 (WAAGTVAAMSSITFPAVSALI). Over 369–389 (SRNAESDQQGVAQGIVTGIRG) the chain is Extracellular. The chain crosses the membrane as a helical span at residues 390–410 (LCNGLGPALYGFIFYMFHVEL). The Cytoplasmic portion of the chain corresponds to 411–430 (SELGPKLNSDDDPLQGAFIP). Residues 431–451 (GPPFLFGACIVLMSFLVALFI) traverse the membrane as a helical segment. Residues 452 to 507 (PEYRKTSGVQKHNNSTSGSLSTPPERGSDEDIEPLLQDSSIWELSFEEPGNQCTEL) are Extracellular-facing. Positions 459 to 473 (GVQKHNNSTSGSLST) are enriched in polar residues. The tract at residues 459–483 (GVQKHNNSTSGSLSTPPERGSDEDI) is disordered. N-linked (GlcNAc...) asparagine glycosylation is found at Asn-464 and Asn-465.

The protein belongs to the major facilitator superfamily.

The protein localises to the membrane. In Mus musculus (Mouse), this protein is Hippocampus abundant transcript-like protein 1.